We begin with the raw amino-acid sequence, 216 residues long: CASP-like protein 2U1 (216 aa).

A disordered region spans residues 1 to 30 (MKQDTEMGEATNGYIGTPGTVPVSHAGNDS). At 1-37 (MKQDTEMGEATNGYIGTPGTVPVSHAGNDSGMRRMRT) the chain is on the cytoplasmic side. Residues 38-58 (ASILMRLTAMALCVTALVTMV) traverse the membrane as a helical segment. At 59-86 (TDKQTHYFNFASTTIVKTAEYTNVLALK) the chain is on the extracellular side. The helical transmembrane segment at 87-107 (VFVYTNGVIAGYSLLQALWTI) threads the bilayer. At 108–128 (VAKSSYSTSKARLWTTFFLDQ) the chain is on the cytoplasmic side. The helical transmembrane segment at 129 to 148 (FIVYVLIGVTGAATEVAYIA) threads the bilayer. The Extracellular portion of the chain corresponds to 149–170 (EKGESDVAWPKQCNNFGRFCSQ). The helical transmembrane segment at 171-191 (VGASVIVCFVAILTLVFLAVL) threads the bilayer. The Cytoplasmic portion of the chain corresponds to 192-216 (SAKQLFIHERPSRTTRKDGYYTSNQ).

This sequence belongs to the Casparian strip membrane proteins (CASP) family. In terms of assembly, homodimer and heterodimers.

The protein localises to the cell membrane. This is CASP-like protein 2U1 from Marchantia polymorpha (Common liverwort).